The sequence spans 110 residues: Large ribosomal subunit protein P2B (110 aa).

Low complexity predominate over residues 73-88; that stretch reads TPAAGGAAGAEATSAA. The segment at 73 to 110 is disordered; the sequence is TPAAGGAAGAEATSAAEEAKEEEAAEESDEDMGFGLFD. The segment covering 91–104 has biased composition (acidic residues); sequence AKEEEAAEESDEDM. The residue at position 100 (Ser100) is a Phosphoserine.

This sequence belongs to the eukaryotic ribosomal protein P1/P2 family. Component of the large ribosomal subunit (LSU). Mature yeast ribosomes consist of a small (40S) and a large (60S) subunit. The 40S small subunit contains 1 molecule of ribosomal RNA (18S rRNA) and at least 33 different proteins. The large 60S subunit contains 3 rRNA molecules (25S, 5.8S and 5S rRNA) and at least 46 different proteins. The acidic ribosomal P-proteins form the stalk structure of the 60S subunit. They are organized as a pentameric complex in which uL10/P0 interacts with 2 heterodimers of P1 and P2 proteins.

It localises to the cytoplasm. Its function is as follows. Component of the ribosome, a large ribonucleoprotein complex responsible for the synthesis of proteins in the cell. The small ribosomal subunit (SSU) binds messenger RNAs (mRNAs) and translates the encoded message by selecting cognate aminoacyl-transfer RNA (tRNA) molecules. The large subunit (LSU) contains the ribosomal catalytic site termed the peptidyl transferase center (PTC), which catalyzes the formation of peptide bonds, thereby polymerizing the amino acids delivered by tRNAs into a polypeptide chain. The nascent polypeptides leave the ribosome through a tunnel in the LSU and interact with protein factors that function in enzymatic processing, targeting, and the membrane insertion of nascent chains at the exit of the ribosomal tunnel. This Schizosaccharomyces pombe (strain 972 / ATCC 24843) (Fission yeast) protein is Large ribosomal subunit protein P2B (rpp202).